Reading from the N-terminus, the 318-residue chain is tRNA dimethylallyltransferase (318 aa).

An ATP-binding site is contributed by 9–16 (GATASGKT). Substrate is bound at residue 11–16 (TASGKT). 2 interaction with substrate tRNA regions span residues 34-37 (DSAQ) and 158-162 (QRIIR).

The protein belongs to the IPP transferase family. Monomer. The cofactor is Mg(2+).

The catalysed reaction is adenosine(37) in tRNA + dimethylallyl diphosphate = N(6)-dimethylallyladenosine(37) in tRNA + diphosphate. Catalyzes the transfer of a dimethylallyl group onto the adenine at position 37 in tRNAs that read codons beginning with uridine, leading to the formation of N6-(dimethylallyl)adenosine (i(6)A). This is tRNA dimethylallyltransferase from Dichelobacter nodosus (strain VCS1703A).